A 133-amino-acid polypeptide reads, in one-letter code: ATP synthase epsilon chain (133 aa).

Belongs to the ATPase epsilon chain family. As to quaternary structure, F-type ATPases have 2 components, CF(1) - the catalytic core - and CF(0) - the membrane proton channel. CF(1) has five subunits: alpha(3), beta(3), gamma(1), delta(1), epsilon(1). CF(0) has three main subunits: a, b and c.

Its subcellular location is the cell membrane. In terms of biological role, produces ATP from ADP in the presence of a proton gradient across the membrane. This Alkalihalophilus pseudofirmus (strain ATCC BAA-2126 / JCM 17055 / OF4) (Bacillus pseudofirmus) protein is ATP synthase epsilon chain (atpC).